Here is a 320-residue protein sequence, read N- to C-terminus: Uridine phosphorylase 2 (320 aa).

Residues G66, R100, and 144 to 147 (RIGT) contribute to the phosphate site. A disulfide bridge links C95 with C102. Uridine contacts are provided by residues 148–149 (SG) and 223–225 (QGR).

It belongs to the PNP/UDP phosphorylase family. As to quaternary structure, homodimer. As to expression, liver specific.

The enzyme catalyses uridine + phosphate = alpha-D-ribose 1-phosphate + uracil. The catalysed reaction is 2'-deoxyuridine + phosphate = 2-deoxy-alpha-D-ribose 1-phosphate + uracil. Its pathway is pyrimidine metabolism; UMP biosynthesis via salvage pathway; uracil from uridine (phosphorylase route): step 1/1. Its activity is regulated as follows. A conditional disulfide bridge can form within the protein that dislocates a critical phosphate-coordinating arginine Arg-100 away from the active site, disabling the enzyme. In terms of biological role, catalyzes the reversible phosphorylytic cleavage of uridine to uracil and ribose-1-phosphate which can then be utilized as carbon and energy sources or in the rescue of pyrimidine bases for nucleotide synthesis. Shows broad substrate specificity and can also accept deoxyuridine and other analogous compounds. In Mus musculus (Mouse), this protein is Uridine phosphorylase 2.